Here is a 450-residue protein sequence, read N- to C-terminus: Probable malate:quinone oxidoreductase (450 aa).

The protein belongs to the MQO family. FAD is required as a cofactor.

The enzyme catalyses (S)-malate + a quinone = a quinol + oxaloacetate. It functions in the pathway carbohydrate metabolism; tricarboxylic acid cycle; oxaloacetate from (S)-malate (quinone route): step 1/1. The protein is Probable malate:quinone oxidoreductase of Helicobacter pylori (strain P12).